The primary structure comprises 51 residues: Large ribosomal subunit protein bL33 (51 aa).

It belongs to the bacterial ribosomal protein bL33 family. Part of the 50S ribosomal subunit. Cross-links to the P and E site tRNAs.

The sequence is that of Large ribosomal subunit protein bL33 from Pseudomonas aeruginosa (strain ATCC 15692 / DSM 22644 / CIP 104116 / JCM 14847 / LMG 12228 / 1C / PRS 101 / PAO1).